We begin with the raw amino-acid sequence, 546 residues long: Chaperonin GroEL (546 aa).

ATP-binding positions include 29–32, lysine 50, 86–90, glycine 414, 477–479, and aspartate 493; these read TLGP, DGTTT, and NAA.

It belongs to the chaperonin (HSP60) family. As to quaternary structure, forms a cylinder of 14 subunits composed of two heptameric rings stacked back-to-back. Interacts with the co-chaperonin GroES.

It is found in the cytoplasm. It catalyses the reaction ATP + H2O + a folded polypeptide = ADP + phosphate + an unfolded polypeptide.. Its function is as follows. Together with its co-chaperonin GroES, plays an essential role in assisting protein folding. The GroEL-GroES system forms a nano-cage that allows encapsulation of the non-native substrate proteins and provides a physical environment optimized to promote and accelerate protein folding. This is Chaperonin GroEL from Geobacter metallireducens (strain ATCC 53774 / DSM 7210 / GS-15).